Reading from the N-terminus, the 370-residue chain is 4-hydroxy-3-methylbut-2-en-1-yl diphosphate synthase (flavodoxin) (370 aa).

[4Fe-4S] cluster contacts are provided by C268, C271, C303, and E310.

Belongs to the IspG family. The cofactor is [4Fe-4S] cluster.

It carries out the reaction (2E)-4-hydroxy-3-methylbut-2-enyl diphosphate + oxidized [flavodoxin] + H2O + 2 H(+) = 2-C-methyl-D-erythritol 2,4-cyclic diphosphate + reduced [flavodoxin]. It participates in isoprenoid biosynthesis; isopentenyl diphosphate biosynthesis via DXP pathway; isopentenyl diphosphate from 1-deoxy-D-xylulose 5-phosphate: step 5/6. Functionally, converts 2C-methyl-D-erythritol 2,4-cyclodiphosphate (ME-2,4cPP) into 1-hydroxy-2-methyl-2-(E)-butenyl 4-diphosphate. This chain is 4-hydroxy-3-methylbut-2-en-1-yl diphosphate synthase (flavodoxin), found in Bacillus anthracis (strain A0248).